The sequence spans 515 residues: Fc receptor-like protein 4 (515 aa).

The signal sequence occupies residues 1 to 19; the sequence is MLLWASLLAFAPVCGQSAA. Residues 20–387 lie on the Extracellular side of the membrane; it reads AHKPVISVHP…RETPGNRDGL (368 aa). 4 Ig-like C2-type domains span residues 23-97, 102-183, 193-271, and 275-374; these read PVIS…NPVR, SDSL…NFKI, PELK…GNIH, and PSLQ…MVLN. Intrachain disulfides connect Cys44–Cys85, Cys123–Cys167, Cys212–Cys261, and Cys310–Cys359. N-linked (GlcNAc...) asparagine glycosylation is present at Asn374. A helical membrane pass occupies residues 388-408; it reads VAAGATGGLLSALLLAVALLF. At 409 to 515 the chain is on the cytoplasmic side; the sequence is HCWRRRKSGV…GKISSKDEES (107 aa). 3 consecutive short sequence motifs (ITIM motif) follow at residues 449-454, 461-466, and 491-496; these read SLYVDV, LVYSEI, and VVYSEV. Positions 494-515 are disordered; that stretch reads SEVKTQHPDNSAGKISSKDEES.

Interacts with PTPN6 and PTPN11. Phosphorylated on cytoplasmic tyrosines upon activation. Specifically expressed by memory and monocytoid B-cells which populate spleen and lymph nodes. Preferentially expressed in memory B-cells associated with mucosal tissue (at protein level).

The protein localises to the cell membrane. May function as an inhibitor of the B-cell receptor signaling. May function in the B-cell-mediated immune response. This Homo sapiens (Human) protein is Fc receptor-like protein 4 (FCRL4).